The primary structure comprises 123 residues: uncharacterized protein (123 aa).

A signal peptide spans 1-19 (MKIKYFFIPLFSSAILFSA). Residue C20 is the site of N-palmitoyl cysteine attachment. Residue C20 is the site of S-diacylglycerol cysteine attachment.

It belongs to the MG439/MG440 family.

It localises to the cell membrane. This is an uncharacterized protein from Mycoplasma pneumoniae (strain ATCC 29342 / M129 / Subtype 1) (Mycoplasmoides pneumoniae).